Here is a 455-residue protein sequence, read N- to C-terminus: ATP-dependent protease ATPase subunit HslU (455 aa).

Residues Ile-19 and 61–66 (GVGKTE) contribute to the ATP site. A disordered region spans residues 144 to 163 (ESKVGFANEPAEDAASKKEK). ATP-binding residues include Asp-268, Glu-333, and Arg-405.

Belongs to the ClpX chaperone family. HslU subfamily. In terms of assembly, a double ring-shaped homohexamer of HslV is capped on each side by a ring-shaped HslU homohexamer. The assembly of the HslU/HslV complex is dependent on binding of ATP.

The protein resides in the cytoplasm. ATPase subunit of a proteasome-like degradation complex; this subunit has chaperone activity. The binding of ATP and its subsequent hydrolysis by HslU are essential for unfolding of protein substrates subsequently hydrolyzed by HslV. HslU recognizes the N-terminal part of its protein substrates and unfolds these before they are guided to HslV for hydrolysis. This chain is ATP-dependent protease ATPase subunit HslU, found in Francisella tularensis subsp. holarctica (strain FTNF002-00 / FTA).